The chain runs to 254 residues: Zinc import ATP-binding protein ZnuC (254 aa).

The region spanning 5 to 219 is the ABC transporter domain; the sequence is VELKEVCLSF…PEFARLFGRP (215 aa). 37 to 44 lines the ATP pocket; it reads GPNGAGKS. Residues 233–242 are compositionally biased toward basic and acidic residues; that stretch reads CDGEHHHHEP. Positions 233-254 are disordered; it reads CDGEHHHHEPQVPVIRLPSRNQ.

The protein belongs to the ABC transporter superfamily. Zinc importer (TC 3.A.1.15.5) family. In terms of assembly, the complex is composed of two ATP-binding proteins (ZnuC), two transmembrane proteins (ZnuB) and a solute-binding protein (ZnuA).

It localises to the cell inner membrane. It carries out the reaction Zn(2+)(out) + ATP(in) + H2O(in) = Zn(2+)(in) + ADP(in) + phosphate(in) + H(+)(in). Its function is as follows. Part of the ABC transporter complex ZnuABC involved in zinc import. Responsible for energy coupling to the transport system. The chain is Zinc import ATP-binding protein ZnuC from Aeromonas hydrophila subsp. hydrophila (strain ATCC 7966 / DSM 30187 / BCRC 13018 / CCUG 14551 / JCM 1027 / KCTC 2358 / NCIMB 9240 / NCTC 8049).